A 455-amino-acid polypeptide reads, in one-letter code: Chromosomal replication initiator protein DnaA (455 aa).

Positions 1 to 75 (MDTNNNIEKE…EILSQNKVGM (75 aa)) are domain I, interacts with DnaA modulators. Residues 75–106 (MHLAHSVDVRIEVAPKIQISTQSNINYKATKM) form a domain II region. Residues 107 to 321 (SVKDSYTFEN…GAIIKISVNA (215 aa)) are domain III, AAA+ region. Gly-151, Gly-153, Lys-154, and Thr-155 together coordinate ATP. Residues 322-455 (NLMNASIDLN…DKKTAFNSSE (134 aa)) are domain IV, binds dsDNA.

Belongs to the DnaA family. As to quaternary structure, oligomerizes as a right-handed, spiral filament on DNA at oriC.

The protein localises to the cytoplasm. Its function is as follows. Plays an essential role in the initiation and regulation of chromosomal replication. ATP-DnaA binds to the origin of replication (oriC) to initiate formation of the DNA replication initiation complex once per cell cycle. Binds the DnaA box (a 9 base pair repeat at the origin) and separates the double-stranded (ds)DNA. Forms a right-handed helical filament on oriC DNA; dsDNA binds to the exterior of the filament while single-stranded (ss)DNA is stabiized in the filament's interior. The ATP-DnaA-oriC complex binds and stabilizes one strand of the AT-rich DNA unwinding element (DUE), permitting loading of DNA polymerase. After initiation quickly degrades to an ADP-DnaA complex that is not apt for DNA replication. Binds acidic phospholipids. In Helicobacter pylori (strain HPAG1), this protein is Chromosomal replication initiator protein DnaA.